Reading from the N-terminus, the 510-residue chain is Protein HGV2 (510 aa).

The tract at residues 95 to 227 (GVPEEDADGD…KENESEEDPD (133 aa)) is disordered. Acidic residues predominate over residues 98–110 (EEDADGDSDQEQE). Composition is skewed to basic and acidic residues over residues 111–129 (QFEK…REEV) and 142–199 (EERG…DKPV). A compositionally biased stretch (low complexity) spans 204–217 (TEEPGTSGTSASSS). 2 TPR repeats span residues 260–293 (AQCH…QKDL) and 302–335 (AETY…LEAR). Residues 391-510 (DGSPFRQASE…TPKKDAAKRR (120 aa)) are disordered. Low complexity predominate over residues 398–411 (ASEGESSSGLGAST). 2 short sequence motifs (nuclear localization signal) span residues 444–451 (VRRKRPSP) and 465–471 (SKKAKQE). Residues 459–471 (ESKENESKKAKQE) show a composition bias toward basic and acidic residues.

The protein belongs to the NASP family. Embryo and larvae.

The protein localises to the nucleus. May function as a nucleosome assembly factor during rapid embryonic cell divisions. This is Protein HGV2 (HGV2) from Halocynthia roretzi (Sea squirt).